Consider the following 251-residue polypeptide: Phosphomannomutase (251 aa).

D18 functions as the Nucleophile in the catalytic mechanism. 2 residues coordinate Mg(2+): D18 and D20. The active-site Proton donor/acceptor is the D20. Alpha-D-mannose 1-phosphate is bound by residues R27, R129, R140, R147, S185, and D187. 4 residues coordinate Mg(2+): D213, F225, D227, and T230.

Belongs to the eukaryotic PMM family. In terms of assembly, homodimer. Mg(2+) is required as a cofactor.

Its subcellular location is the cytoplasm. The catalysed reaction is alpha-D-mannose 1-phosphate = D-mannose 6-phosphate. It functions in the pathway nucleotide-sugar biosynthesis; GDP-alpha-D-mannose biosynthesis; alpha-D-mannose 1-phosphate from D-fructose 6-phosphate: step 2/2. Catalyzes the interconversion of mannose-6-phosphate to mannose-1-phosphate, the precursor for the synthesis of GDP-mannose. GDP-mannose is an essential sugar nucleotide for the synthesis of D-mannose-containing cell wall polysaccharides (galactomannans and glucomannans), glycolipids, glycoproteins and the antioxidant L-ascorbate. The chain is Phosphomannomutase from Galdieria sulphuraria (Red alga).